Here is a 417-residue protein sequence, read N- to C-terminus: Tyrosine--tRNA ligase (417 aa).

Tyrosine 36 is an L-tyrosine binding site. Positions proline 41–histidine 50 match the 'HIGH' region motif. 2 residues coordinate L-tyrosine: tyrosine 170 and glutamine 174. The 'KMSKS' region motif lies at lysine 231–serine 235. Lysine 234 contributes to the ATP binding site. The region spanning threonine 351–histidine 417 is the S4 RNA-binding domain.

Belongs to the class-I aminoacyl-tRNA synthetase family. TyrS type 1 subfamily. Homodimer.

The protein resides in the cytoplasm. The catalysed reaction is tRNA(Tyr) + L-tyrosine + ATP = L-tyrosyl-tRNA(Tyr) + AMP + diphosphate + H(+). Catalyzes the attachment of tyrosine to tRNA(Tyr) in a two-step reaction: tyrosine is first activated by ATP to form Tyr-AMP and then transferred to the acceptor end of tRNA(Tyr). This is Tyrosine--tRNA ligase from Macrococcus caseolyticus (strain JCSC5402) (Macrococcoides caseolyticum).